The chain runs to 551 residues: Endolytic murein transglycosylase (551 aa).

Over 1–187 (MSEKSREEEK…PKKEKKSHVK (187 aa)) the chain is Cytoplasmic. Positions 38-180 (VRTPANEPSA…EGAKPAKPKK (143 aa)) are disordered. Composition is skewed to low complexity over residues 100 to 110 (PSSPAEESGSR) and 145 to 157 (QAGPETPTPATET). The span at 159 to 174 (DIIRDTSRRSRREGAK) shows a compositional bias: basic and acidic residues. A helical transmembrane segment spans residues 188-208 (AFVISFLVFLALLSAGGYFGY). At 209 to 551 (QYVLDSLLPI…VAEHVNSKLN (343 aa)) the chain is on the extracellular side.

The protein belongs to the transglycosylase MltG family.

Its subcellular location is the cell membrane. The enzyme catalyses a peptidoglycan chain = a peptidoglycan chain with N-acetyl-1,6-anhydromuramyl-[peptide] at the reducing end + a peptidoglycan chain with N-acetylglucosamine at the non-reducing end.. Functionally, functions as a peptidoglycan terminase that cleaves nascent peptidoglycan strands endolytically to terminate their elongation. Involved in peripheral peptidoglycan (PG) synthesis. The chain is Endolytic murein transglycosylase from Streptococcus pneumoniae serotype 2 (strain D39 / NCTC 7466).